Consider the following 60-residue polypeptide: Large ribosomal subunit protein bL32 (60 aa).

Positions 1–19 (MGVPKRKTSKGRRDKRRAH) are enriched in basic residues. The disordered stretch occupies residues 1–20 (MGVPKRKTSKGRRDKRRAHL).

The protein belongs to the bacterial ribosomal protein bL32 family.

This is Large ribosomal subunit protein bL32 from Syntrophobacter fumaroxidans (strain DSM 10017 / MPOB).